The chain runs to 941 residues: Isoleucine--tRNA ligase (941 aa).

The 'HIGH' region signature appears at 59–69; the sequence is PYANGNIHIGH. Position 562 (Glu562) interacts with L-isoleucyl-5'-AMP. The 'KMSKS' region motif lies at 603–607; it reads KMSKS. Lys606 lines the ATP pocket. Zn(2+) is bound by residues Cys904, Cys907, Cys924, and Cys927.

This sequence belongs to the class-I aminoacyl-tRNA synthetase family. IleS type 1 subfamily. Monomer. It depends on Zn(2+) as a cofactor.

The protein localises to the cytoplasm. It carries out the reaction tRNA(Ile) + L-isoleucine + ATP = L-isoleucyl-tRNA(Ile) + AMP + diphosphate. Functionally, catalyzes the attachment of isoleucine to tRNA(Ile). As IleRS can inadvertently accommodate and process structurally similar amino acids such as valine, to avoid such errors it has two additional distinct tRNA(Ile)-dependent editing activities. One activity is designated as 'pretransfer' editing and involves the hydrolysis of activated Val-AMP. The other activity is designated 'posttransfer' editing and involves deacylation of mischarged Val-tRNA(Ile). The polypeptide is Isoleucine--tRNA ligase (Haemophilus influenzae (strain ATCC 51907 / DSM 11121 / KW20 / Rd)).